We begin with the raw amino-acid sequence, 664 residues long: DNA mismatch repair protein MutL (664 aa).

The tract at residues 382–447 (RKAGQEQQLQ…YGEPAPSKQQ (66 aa)) is disordered. Residues 427–436 (RHTTSSNQSE) show a composition bias toward polar residues.

Belongs to the DNA mismatch repair MutL/HexB family.

Functionally, this protein is involved in the repair of mismatches in DNA. It is required for dam-dependent methyl-directed DNA mismatch repair. May act as a 'molecular matchmaker', a protein that promotes the formation of a stable complex between two or more DNA-binding proteins in an ATP-dependent manner without itself being part of a final effector complex. This is DNA mismatch repair protein MutL from Vibrio vulnificus (strain CMCP6).